Reading from the N-terminus, the 82-residue chain is Metallothionein-like protein 2A (82 aa).

This sequence belongs to the metallothionein superfamily. Type 15 family. As to expression, expressed in stems, leaves, rachis, inflorescences and seeds.

Functionally, metallothioneins have a high content of cysteine residues that bind various heavy metals. This is Metallothionein-like protein 2A (MT2A) from Oryza sativa subsp. japonica (Rice).